Here is a 1465-residue protein sequence, read N- to C-terminus: DNA polymerase III PolC-type (1465 aa).

In terms of domain architecture, Exonuclease spans 427 to 583; that stretch reads YVVFDVETTG…YDAEATGRLL (157 aa).

Belongs to the DNA polymerase type-C family. PolC subfamily.

The protein resides in the cytoplasm. The catalysed reaction is DNA(n) + a 2'-deoxyribonucleoside 5'-triphosphate = DNA(n+1) + diphosphate. Functionally, required for replicative DNA synthesis. This DNA polymerase also exhibits 3' to 5' exonuclease activity. The sequence is that of DNA polymerase III PolC-type from Streptococcus pyogenes serotype M5 (strain Manfredo).